A 153-amino-acid chain; its full sequence is 6,7-dimethyl-8-ribityllumazine synthase (153 aa).

5-amino-6-(D-ribitylamino)uracil is bound by residues Phe-22, 56-58 (AFE), and 80-82 (TVI). 85 to 86 (AT) provides a ligand contact to (2S)-2-hydroxy-3-oxobutyl phosphate. The active-site Proton donor is the His-88. Phe-113 contacts 5-amino-6-(D-ribitylamino)uracil. A (2S)-2-hydroxy-3-oxobutyl phosphate-binding site is contributed by Arg-127.

It belongs to the DMRL synthase family.

It catalyses the reaction (2S)-2-hydroxy-3-oxobutyl phosphate + 5-amino-6-(D-ribitylamino)uracil = 6,7-dimethyl-8-(1-D-ribityl)lumazine + phosphate + 2 H2O + H(+). Its pathway is cofactor biosynthesis; riboflavin biosynthesis; riboflavin from 2-hydroxy-3-oxobutyl phosphate and 5-amino-6-(D-ribitylamino)uracil: step 1/2. Its function is as follows. Catalyzes the formation of 6,7-dimethyl-8-ribityllumazine by condensation of 5-amino-6-(D-ribitylamino)uracil with 3,4-dihydroxy-2-butanone 4-phosphate. This is the penultimate step in the biosynthesis of riboflavin. This chain is 6,7-dimethyl-8-ribityllumazine synthase, found in Clostridium perfringens (strain 13 / Type A).